Consider the following 1021-residue polypeptide: Ankyrin repeat- and BTB/POZ domain-containing protein 3-A (1021 aa).

Residues 160 to 180 (MVLSWTISVNCITAALSALSL) form a helical membrane-spanning segment. ANK repeat units lie at residues 515-544 (QGMTPLMYSCVRGDEAMVQMLLDAGADINS), 561-590 (RQGTPLTFAVLHGHVPVVQLLLDARANVEG), 599-628 (YTETPLQLASAAGNFELVSLLLERGADPLI), and 642-671 (GEMNSYSLAAAHGHRNVFRKLLSQVEKDKG). Positions 836-902 (SDVTFLVEGK…LYCGGTESLH (67 aa)) constitute a BTB domain.

Its subcellular location is the membrane. In Danio rerio (Zebrafish), this protein is Ankyrin repeat- and BTB/POZ domain-containing protein 3-A (abtb3a).